The following is a 262-amino-acid chain: Diphthine synthase (262 aa).

S-adenosyl-L-methionine is bound by residues L10, D87, V90, 115–116, L166, A209, and H234; that span reads SI.

Belongs to the diphthine synthase family. As to quaternary structure, homodimer.

It carries out the reaction 2-[(3S)-amino-3-carboxypropyl]-L-histidyl-[translation elongation factor 2] + 3 S-adenosyl-L-methionine = diphthine-[translation elongation factor 2] + 3 S-adenosyl-L-homocysteine + 3 H(+). It functions in the pathway protein modification; peptidyl-diphthamide biosynthesis. S-adenosyl-L-methionine-dependent methyltransferase that catalyzes the trimethylation of the amino group of the modified target histidine residue in translation elongation factor 2 (EF-2), to form an intermediate called diphthine. The three successive methylation reactions represent the second step of diphthamide biosynthesis. This chain is Diphthine synthase, found in Pyrococcus abyssi (strain GE5 / Orsay).